The chain runs to 201 residues: Oligoribonuclease (201 aa).

The Exonuclease domain maps to 20–183 (LVWLDMEMTG…ADIHESIDEL (164 aa)). Residue Tyr-141 is part of the active site.

The protein belongs to the oligoribonuclease family.

It is found in the cytoplasm. Its function is as follows. 3'-to-5' exoribonuclease specific for small oligoribonucleotides. This chain is Oligoribonuclease, found in Burkholderia mallei (strain NCTC 10229).